Consider the following 189-residue polypeptide: Peptidyl-tRNA hydrolase (189 aa).

Y15 is a tRNA binding site. Residue H20 is the Proton acceptor of the active site. TRNA-binding residues include F66, N68, and N114.

The protein belongs to the PTH family. Monomer.

The protein localises to the cytoplasm. The catalysed reaction is an N-acyl-L-alpha-aminoacyl-tRNA + H2O = an N-acyl-L-amino acid + a tRNA + H(+). In terms of biological role, hydrolyzes ribosome-free peptidyl-tRNAs (with 1 or more amino acids incorporated), which drop off the ribosome during protein synthesis, or as a result of ribosome stalling. Its function is as follows. Catalyzes the release of premature peptidyl moieties from peptidyl-tRNA molecules trapped in stalled 50S ribosomal subunits, and thus maintains levels of free tRNAs and 50S ribosomes. This chain is Peptidyl-tRNA hydrolase, found in Streptococcus pneumoniae (strain CGSP14).